The sequence spans 1228 residues: DNA repair protein rad5 (1228 aa).

Disordered regions lie at residues M1–T96, P194–S242, Q280–S302, and K445–E474. Residues P34–P43 are compositionally biased toward low complexity. A compositionally biased stretch (acidic residues) spans H70–E83. Residues P211–T237 are compositionally biased toward polar residues. The span at K445 to D454 shows a compositional bias: basic and acidic residues. Over residues E465 to E474 the composition is skewed to acidic residues. A Helicase ATP-binding domain is found at P574 to E784. D587–T594 provides a ligand contact to ATP. The DEAH box signature appears at D735–H738. The RING-type zinc-finger motif lies at C967–R1012. Residues A1060 to Q1216 enclose the Helicase C-terminal domain.

Belongs to the SNF2/RAD54 helicase family.

Its subcellular location is the cytoplasm. The protein resides in the nucleus. Probable helicase, member of the UBC2/RAD6 epistasis group. Functions with DNA repair protein uvs-2/rad18 in error-free postreplication DNA repair. Involved in the maintenance of wild-type rates of instability of simple repetitive sequences such as poly(GT) repeats. Seems to be involved in maintaining a balance which acts in favor of error-prone non-homologous joining during DNA double-strand breaks repairs. The protein is DNA repair protein rad5 (mus-41) of Neurospora crassa (strain ATCC 24698 / 74-OR23-1A / CBS 708.71 / DSM 1257 / FGSC 987).